Reading from the N-terminus, the 63-residue chain is Large ribosomal subunit protein uL29 (63 aa).

The protein belongs to the universal ribosomal protein uL29 family.

This is Large ribosomal subunit protein uL29 from Stutzerimonas stutzeri (strain A1501) (Pseudomonas stutzeri).